The primary structure comprises 293 residues: Ribosomal RNA small subunit methyltransferase A (293 aa).

6 residues coordinate S-adenosyl-L-methionine: asparagine 33, valine 35, glycine 60, glutamate 81, aspartate 111, and asparagine 130.

Belongs to the class I-like SAM-binding methyltransferase superfamily. rRNA adenine N(6)-methyltransferase family. RsmA subfamily.

The protein resides in the cytoplasm. The enzyme catalyses adenosine(1518)/adenosine(1519) in 16S rRNA + 4 S-adenosyl-L-methionine = N(6)-dimethyladenosine(1518)/N(6)-dimethyladenosine(1519) in 16S rRNA + 4 S-adenosyl-L-homocysteine + 4 H(+). Functionally, specifically dimethylates two adjacent adenosines (A1518 and A1519) in the loop of a conserved hairpin near the 3'-end of 16S rRNA in the 30S particle. May play a critical role in biogenesis of 30S subunits. The polypeptide is Ribosomal RNA small subunit methyltransferase A (Corynebacterium glutamicum (strain ATCC 13032 / DSM 20300 / JCM 1318 / BCRC 11384 / CCUG 27702 / LMG 3730 / NBRC 12168 / NCIMB 10025 / NRRL B-2784 / 534)).